Reading from the N-terminus, the 1310-residue chain is Vacuolating cytotoxin autotransporter (1310 aa).

The signal sequence occupies residues Met1–Ala30. Residues Pro339–Ile364 are disordered. A compositionally biased stretch (polar residues) spans Asn350–Ile364. Residues Lys1038–Phe1310 enclose the Autotransporter domain.

It is found in the periplasm. It localises to the secreted. Its subcellular location is the cell surface. The protein localises to the cell outer membrane. Induces vacuolation of eukaryotic cells. Causes ulceration and gastric lesions. This chain is Vacuolating cytotoxin autotransporter (vacA), found in Helicobacter pylori (Campylobacter pylori).